We begin with the raw amino-acid sequence, 271 residues long: Aquaporin-2 (271 aa).

The Cytoplasmic portion of the chain corresponds to 1-11 (MWELRSIAFSR). A helical membrane pass occupies residues 12–32 (AVLAEFLATLLFVFFGLGSAL). Residues 33-40 (QWASSPPS) are Extracellular-facing. The helical transmembrane segment at 41–59 (VLQIAVAFGLGIGILVQAL) threads the bilayer. Residues 60–64 (GHVSG) lie on the Cytoplasmic side of the membrane. An intramembrane region (discontinuously helical) is located at residues 65-74 (AHINPAVTVA). Residues 68-70 (NPA) carry the NPA 1 motif. Residues 75–85 (CLVGCHVSFLR) lie on the Cytoplasmic side of the membrane. Residues 86-107 (AAFYVAAQLLGAVAGAAILHEI) form a helical membrane-spanning segment. At 108-127 (TPVEIRGDLAVNALHNNATA) the chain is on the extracellular side. An N-linked (GlcNAc...) asparagine glycan is attached at Asn-124. A helical membrane pass occupies residues 128-148 (GQAVTVELFLTMQLVLCIFAS). Residues 149–156 (TDERRGDN) are Cytoplasmic-facing. The helical transmembrane segment at 157 to 176 (LGSPALSIGFSVTLGHLLGI) threads the bilayer. The Extracellular portion of the chain corresponds to 177 to 180 (YFTG). The segment at residues 181 to 193 (CSMNPARSLAPAV) is an intramembrane region (discontinuously helical). The short motif at 184-186 (NPA) is the NPA 2 element. Residues 194–201 (VTGKFDDH) are Extracellular-facing. Residues 202–222 (WVFWIGPLVGAIIGSLLYNYL) form a helical membrane-spanning segment. The Cytoplasmic portion of the chain corresponds to 223 to 271 (LFPSAKSLQERLAVLKGLEPDTDWEEREVRRRQSVELHSPQSLPRGSKA). Positions 251 to 271 (VRRRQSVELHSPQSLPRGSKA) are disordered. Residues Ser-256, Ser-261, Ser-264, and Ser-269 each carry the phosphoserine modification. The span at 261–271 (SPQSLPRGSKA) shows a compositional bias: polar residues.

Belongs to the MIP/aquaporin (TC 1.A.8) family. Homotetramer. Ser-256 phosphorylation is necessary and sufficient for expression at the apical membrane. Endocytosis is not phosphorylation-dependent. Post-translationally, N-glycosylated. As to expression, detected in kidney, in cortical and the medullary collecting tubules (at protein level). Detected in kidney medulla and cortex.

It localises to the apical cell membrane. The protein resides in the basolateral cell membrane. The protein localises to the cell membrane. Its subcellular location is the cytoplasmic vesicle membrane. It is found in the golgi apparatus. It localises to the trans-Golgi network membrane. The enzyme catalyses H2O(in) = H2O(out). The catalysed reaction is glycerol(in) = glycerol(out). In terms of biological role, forms a water-specific channel that provides the plasma membranes of renal collecting duct with high permeability to water, thereby permitting water to move in the direction of an osmotic gradient. Plays an essential role in renal water homeostasis. Could also be permeable to glycerol. The chain is Aquaporin-2 from Rattus norvegicus (Rat).